Consider the following 461-residue polypeptide: Probable Xaa-Pro aminopeptidase PEPP (461 aa).

Mn(2+) is bound by residues Asp257, Asp268, Glu391, and Glu431.

The protein belongs to the peptidase M24B family. Requires Mn(2+) as cofactor.

The enzyme catalyses Release of any N-terminal amino acid, including proline, that is linked to proline, even from a dipeptide or tripeptide.. Catalyzes the removal of a penultimate prolyl residue from the N-termini of peptides. The sequence is that of Probable Xaa-Pro aminopeptidase PEPP (PEPP) from Colletotrichum graminicola (strain M1.001 / M2 / FGSC 10212) (Maize anthracnose fungus).